Here is a 187-residue protein sequence, read N- to C-terminus: Corticoliberin (187 aa).

The first 19 residues, 1-19 (MRLRLLVSAGMLLVALSSC), serve as a signal peptide directing secretion. A propeptide spanning residues 20-144 (LPCRALLSRG…HQGALERERR (125 aa)) is cleaved from the precursor. 2 disordered regions span residues 75-94 (AARL…SRPS) and 114-146 (QRSL…RRSE). Residues 117-129 (LDSRAEPAERGAE) are compositionally biased toward basic and acidic residues. An Isoleucine amide modification is found at I185.

The protein belongs to the sauvagine/corticotropin-releasing factor/urotensin I family. Interacts (via C-terminus) with CRFR1 (via N-terminal extracellular domain). In terms of tissue distribution, expressed in parvocellular paraventricular nucleus of the hypothalamus and in medial accessory olivary nucleus.

It localises to the secreted. In terms of biological role, hormone regulating the release of corticotropin from pituitary gland. Induces NLRP6 in intestinal epithelial cells, hence may influence gut microbiota profile. In Mus musculus (Mouse), this protein is Corticoliberin (Crh).